Consider the following 301-residue polypeptide: uncharacterized protein (301 aa).

The signal sequence occupies residues 1–26; that stretch reads MKGFSCSRPGYLTGLLLLAVAPILTA. Residue C27 is the site of N-palmitoyl cysteine attachment. The S-diacylglycerol cysteine moiety is linked to residue C27. Residues 46–243 form the TNase-like domain; the sequence is KLKPATIEYW…YNAKINIWSH (198 aa). Residues 64–136 form a disordered region; the sequence is NYASEERRKE…SKGDSTGDEK (73 aa). Basic and acidic residues-rich tracts occupy residues 67–95 and 120–136; these read SEERRKEAEQKSKENAKKEDKKEEKKTED and TPEKHVSSKGDSTGDEK.

It is found in the cell membrane. This is an uncharacterized protein from Mycoplasma pneumoniae (strain ATCC 29342 / M129 / Subtype 1) (Mycoplasmoides pneumoniae).